The chain runs to 687 residues: Polyphosphate kinase (687 aa).

N45 contributes to the ATP binding site. Mg(2+)-binding residues include R375 and R405. The Phosphohistidine intermediate role is filled by H435. Residues Y472, R568, and H596 each coordinate ATP.

The protein belongs to the polyphosphate kinase 1 (PPK1) family. Requires Mg(2+) as cofactor. An intermediate of this reaction is the autophosphorylated ppk in which a phosphate is covalently linked to a histidine residue through a N-P bond.

The enzyme catalyses [phosphate](n) + ATP = [phosphate](n+1) + ADP. Functionally, catalyzes the reversible transfer of the terminal phosphate of ATP to form a long-chain polyphosphate (polyP). The sequence is that of Polyphosphate kinase from Burkholderia lata (strain ATCC 17760 / DSM 23089 / LMG 22485 / NCIMB 9086 / R18194 / 383).